We begin with the raw amino-acid sequence, 879 residues long: Prostaglandin F2 receptor negative regulator (879 aa).

A signal peptide spans 1-25 (MGRLASRPLLLALLSLALCRGRVVR). Ig-like C2-type domains are found at residues 26-129 (VPTA…ATVQ) and 149-268 (PSAR…KAVE). Residues 26-832 (VPTATLVRVV…MDVLNAFKYP (807 aa)) are Extracellular-facing. Disulfide bonds link C43–C119 and C169–C247. N44 carries an N-linked (GlcNAc...) asparagine glycan. T271 carries the phosphothreonine modification. Ig-like C2-type domains lie at 276–394 (PSVL…EAVS), 406–536 (PDYQ…DVFS), 544–662 (ALED…AWSP), and 688–813 (PIFN…AEIH). Residues N286, N300, N383, and N413 are each glycosylated (N-linked (GlcNAc...) asparagine). A disulfide bridge connects residues C299 and C373. Positions 424–427 (PTEL) match the Endoplasmic reticulum retention signal motif. C429 and C515 form a disulfide bridge. Residues N525, N600, N618, and N691 are each glycosylated (N-linked (GlcNAc...) asparagine). A disulfide bond links C571 and C655. The short motif at 703–705 (RGD) is the Cell attachment site element. C711 and C793 are disulfide-bonded. The helical transmembrane segment at 833-853 (LLIGVGLSTVIGLLSCLIGYC) threads the bilayer. The Cytoplasmic portion of the chain corresponds to 854–879 (SSHWCCKKEVQETRRERRRLMSMEMD).

Interacts with CD9 and CD81. Part of a complex composed of CD9, CD81 and IGSF8. Also seems to interact with CD63, CD82 and CD151.

It localises to the endoplasmic reticulum membrane. The protein localises to the golgi apparatus. It is found in the trans-Golgi network membrane. In terms of biological role, inhibits the binding of prostaglandin F2-alpha (PGF2-alpha) to its specific FP receptor, by decreasing the receptor number rather than the affinity constant. Functional coupling with the prostaglandin F2-alpha receptor seems to occur. In myoblasts, associates with tetraspanins CD9 and CD81 to prevent myotube fusion during muscle regeneration. In Homo sapiens (Human), this protein is Prostaglandin F2 receptor negative regulator (PTGFRN).